The primary structure comprises 309 residues: Pantothenate kinase (309 aa).

92 to 99 provides a ligand contact to ATP; the sequence is GSVAVGKS.

This sequence belongs to the prokaryotic pantothenate kinase family.

The protein localises to the cytoplasm. The enzyme catalyses (R)-pantothenate + ATP = (R)-4'-phosphopantothenate + ADP + H(+). It functions in the pathway cofactor biosynthesis; coenzyme A biosynthesis; CoA from (R)-pantothenate: step 1/5. The chain is Pantothenate kinase from Latilactobacillus sakei subsp. sakei (strain 23K) (Lactobacillus sakei subsp. sakei).